Consider the following 2090-residue polypeptide: Ninein (2090 aa).

2 consecutive EF-hand domains span residues 8–43 (QHEARLKELFDSFDTTGTGSLGQEELTDLCHMLSLE) and 42–77 (LEEVAPVLQQTLLQDNLLGRVHFDQFKEALILILSR). Position 152 is a phosphoserine (serine 152). 2 consecutive EF-hand domains span residues 182-217 (WIEEKLQEVCEDLGITRDGHLNRKKLVSICEQYGLQ) and 219-252 (VDGEMLEEVFHNLDPDGTMSVEDFFYGLFKNGKS). Residue 245-252 (GLFKNGKS) coordinates GTP. At serine 269 the chain carries Phosphoserine. 300–304 (DGMGH) lines the GTP pocket. One can recognise an EF-hand 5 domain in the interval 317–352 (EGIENSQEILKALDFSLDGNINLTELTLALENELLV). The stretch at 357 to 570 (IHQAALASFK…YRAQGRVLRL (214 aa)) forms a coiled coil. 420 to 423 (RKLD) serves as a coordination point for GTP. A disordered region spans residues 574–595 (NSPSEEVEANSGGIEPEHGLGS). 4 coiled-coil regions span residues 625-1027 (LRLE…QATS), 1068-1099 (LSLQRAHEQAVKENVKMATEISRLQQRLQKLE), 1181-1341 (SELE…SVVQ), and 1441-1816 (QDKH…AGGK). An important for interaction with CEP170 region spans residues 802 to 1505 (KMETECNRRT…HDLQITCSEM (704 aa)). The tract at residues 1152–1190 (VRDLGSTGTSSVQRQEVKIEESEASVEGFSELENSEETR) is disordered. Phosphoserine is present on residues serine 1550 and serine 1837. Coiled-coil stretches lie at residues 1854–1885 (QENERLQTMVQNTKAELTHSREKVRQLESNLL) and 1922–2067 (ANRK…QVSL).

Homooligomer. Interacts with GSK3B/GSK3-beta via its C-terminal domain. Interacts with C14ORF166, such interaction may prevent its phosphorylation by GSK3B. Interacts with AUNIP (via N-terminus). Identified in a complex with AUNIP and AURKA. Interacts with CCDC120. Interacts (via C-terminus) with CEP250. Interacts with CEP170. Interacts with the gamma-tubulin ring complex component TUBGCP3. Interacts with gamma-tubulin. Isoform 6 does not interact with CEP170 or CEP250. Post-translationally, phosphorylated by AURKA/Aurora kinase A and PKA kinases but not CK2 or AURKB/ Aurora kinase B. Ubiquitous. Highly expressed in heart and skeletal muscle. Isoform 1 is more expressed than isoform 5.

The protein resides in the cytoplasm. Its subcellular location is the cytoskeleton. The protein localises to the microtubule organizing center. It is found in the centrosome. It localises to the centriole. Its function is as follows. Centrosomal protein required in the positioning and anchorage of the microtubule minus-end in epithelial cells. May also act as a centrosome maturation factor. May play a role in microtubule nucleation, by recruiting the gamma-tubulin ring complex to the centrosome. Overexpression does not perturb nucleation or elongation of microtubules but suppresses release of microtubules. Required for centriole organization and microtubule anchoring at the mother centriole. This Homo sapiens (Human) protein is Ninein (NIN).